We begin with the raw amino-acid sequence, 157 residues long: Transcriptional repressor NrdR (157 aa).

A zinc finger spans residues 3 to 34 (CPKCNSTHSRVVDSRHADEANAIRRRRECENC). One can recognise an ATP-cone domain in the interval 49-139 (LIVVKKDGTR…VYKEFKDVDQ (91 aa)).

Belongs to the NrdR family. The cofactor is Zn(2+).

Its function is as follows. Negatively regulates transcription of bacterial ribonucleotide reductase nrd genes and operons by binding to NrdR-boxes. This is Transcriptional repressor NrdR from Staphylococcus carnosus (strain TM300).